Here is a 288-residue protein sequence, read N- to C-terminus: Nucleotide-binding protein Veis_1053 (288 aa).

An ATP-binding site is contributed by 10–17; that stretch reads GMSGSGKS. A GTP-binding site is contributed by 59-62; sequence DVRS.

The protein belongs to the RapZ-like family.

Displays ATPase and GTPase activities. The protein is Nucleotide-binding protein Veis_1053 of Verminephrobacter eiseniae (strain EF01-2).